The sequence spans 488 residues: Protein nucleotidyltransferase YdiU (488 aa).

8 residues coordinate ATP: Gly91, Gly93, Arg94, Lys114, Asp126, Gly127, Arg177, and Arg184. Catalysis depends on Asp253, which acts as the Proton acceptor. Residues Asn254 and Asp263 each coordinate Mg(2+). Asp263 is a binding site for ATP.

This sequence belongs to the SELO family. Mg(2+) serves as cofactor. It depends on Mn(2+) as a cofactor.

It catalyses the reaction L-seryl-[protein] + ATP = 3-O-(5'-adenylyl)-L-seryl-[protein] + diphosphate. It carries out the reaction L-threonyl-[protein] + ATP = 3-O-(5'-adenylyl)-L-threonyl-[protein] + diphosphate. The catalysed reaction is L-tyrosyl-[protein] + ATP = O-(5'-adenylyl)-L-tyrosyl-[protein] + diphosphate. The enzyme catalyses L-histidyl-[protein] + UTP = N(tele)-(5'-uridylyl)-L-histidyl-[protein] + diphosphate. It catalyses the reaction L-seryl-[protein] + UTP = O-(5'-uridylyl)-L-seryl-[protein] + diphosphate. It carries out the reaction L-tyrosyl-[protein] + UTP = O-(5'-uridylyl)-L-tyrosyl-[protein] + diphosphate. Functionally, nucleotidyltransferase involved in the post-translational modification of proteins. It can catalyze the addition of adenosine monophosphate (AMP) or uridine monophosphate (UMP) to a protein, resulting in modifications known as AMPylation and UMPylation. This chain is Protein nucleotidyltransferase YdiU, found in Bacillus cereus (strain B4264).